The following is a 218-amino-acid chain: uncharacterized protein (218 aa).

Helical transmembrane passes span 9–29 (LLVIVGIDLILGGDNAVVIAM), 42–62 (AIILGTFIAVAMRIGLTSAAV), 67–87 (IPFLQCAGGIFLLYLGYQLLI), 107–127 (TIVLADLFMSLDNVIAVAGAS), 134–154 (VVIGLCVSVPVIIWGSKLIHI), 159–179 (IPLLIYAGSGLLAYTGGEMIV), and 192–212 (GTVETLLPILTVAFVILASIY).

It belongs to the TerC family.

It is found in the cell membrane. This is an uncharacterized protein from Bacillus subtilis (strain 168).